The sequence spans 970 residues: Protein translocase subunit SecA (970 aa).

ATP is bound by residues Gln-99, 117-121, and Asp-631; that span reads GEGKT.

The protein belongs to the SecA family. In terms of assembly, monomer and homodimer. Part of the essential Sec protein translocation apparatus which comprises SecA, SecYEG and auxiliary proteins SecDF. Other proteins may also be involved.

It is found in the cell inner membrane. The protein resides in the cytoplasm. It carries out the reaction ATP + H2O + cellular proteinSide 1 = ADP + phosphate + cellular proteinSide 2.. Its function is as follows. Part of the Sec protein translocase complex. Interacts with the SecYEG preprotein conducting channel. Has a central role in coupling the hydrolysis of ATP to the transfer of proteins into and across the cell membrane, serving as an ATP-driven molecular motor driving the stepwise translocation of polypeptide chains across the membrane. This chain is Protein translocase subunit SecA, found in Chlamydia caviae (strain ATCC VR-813 / DSM 19441 / 03DC25 / GPIC) (Chlamydophila caviae).